Reading from the N-terminus, the 421-residue chain is Replication-associated recombination protein A (421 aa).

45–52 (GPPGIGKT) is a binding site for ATP.

Belongs to the AAA ATPase family. RarA/MGS1/WRNIP1 subfamily. As to quaternary structure, homotetramer. Interacts with single-stranded binding protein SsbA. May interact with PriA.

Its subcellular location is the cytoplasm. The protein resides in the nucleoid. Its activity is regulated as follows. ssDNA-dependent ATP hydrolysis is stimulated by single-stranded binding protein SsbA but not by SsbB; in the presence of SsbB, ssDNA secondary structure is removed and RarA's ATPase activity is decreased. The C-terminal 9 residues of SsbA are sufficient to stimulate ATPase activity. Its function is as follows. Plays a role in recombination-dependent DNA replication. Positively affects the formation of RecA threads during response to DNA damage, directly or indirectly counteracting the negative RecA modulators RecX and RecU. Stabilizes a RecA-ssDNA complex. In vitro, in the presence of SsbA, inhibits PriA-dependent DNA replication restart of both leading and lagging strands; elongation is insensitive to RarA. Plays a role in response to DNA damage, localizes to the replication fork but also to DNA elsewhere in the cell. Probably required for repair of single-stranded nicks generated by H(2)O(2). Epistatic to RecA, partially represses deletions of the error-prone translesion DNA polymerases (dinB1 and dinB2), genetically interacts with replicative helicase loaders dnaB and dnaD. Epistatic to recF and recO mutations upon DNA damage. A DNA-dependent ATPase stimulated by hairpin structures in circular single-stranded (ss)DNA or ssDNA-dsDNA junctions, by blunt end and 5'-tailed dsDNA and by single-stranded binding protein SsbA protein bound to ssDNA. Preferentially binds ssDNA and replication-fork structures; SsbA stimulates binding to ssDNA. Addition of ATP to the protein has no visible effect in vitro. This chain is Replication-associated recombination protein A, found in Bacillus subtilis (strain 168).